The chain runs to 326 residues: Nucleoporin Nup37 (326 aa).

WD repeat units lie at residues 70-117 (HHGV…KNEY), 122-162 (GHSD…TAHF), 164-203 (LHSP…AILS), and 294-325 (GSVA…WVTE).

In terms of assembly, component of the Nup107-160 subcomplex of the nuclear pore complex (NPC). The Nup107-160 subcomplex includes NUP160, NUP133, NUP107, NUP98, NUP85, NUP43, NUP37, SEH1 and SEC13.

The protein localises to the chromosome. The protein resides in the centromere. Its subcellular location is the kinetochore. It is found in the nucleus. It localises to the nuclear pore complex. Its function is as follows. Component of the Nup107-160 subcomplex of the nuclear pore complex (NPC). The Nup107-160 subcomplex is required for the assembly of a functional NPC. The Nup107-160 subcomplex is also required for normal kinetochore microtubule attachment, mitotic progression and chromosome segregation. The protein is Nucleoporin Nup37 (Nup37) of Mus musculus (Mouse).